A 164-amino-acid polypeptide reads, in one-letter code: E3 ubiquitin ligase complex SCF subunit sconC (164 aa).

Residues 106 to 164 (ILAANYLDIKALLDVGCKTVANMIKGKSPEEIRKTFNIQNDFTPEEEDQIRRENEWAEE) are interaction with the F-box domain of F-box proteins.

Belongs to the SKP1 family. In terms of assembly, component of the SCF (SKP1-CUL1-F-box protein) E3 ubiquitin ligase complexes.

It participates in protein modification; protein ubiquitination. Functionally, essential component of the SCF (SKP1-CUL1-F-box protein) E3 ubiquitin ligase complexes, which mediate the ubiquitination and subsequent proteasomal degradation of target proteins. Controls sulfur metabolite repression, probably by mediating the inactivation or degradation of the metR transcription factor. The sequence is that of E3 ubiquitin ligase complex SCF subunit sconC (sconC) from Arthroderma benhamiae (strain ATCC MYA-4681 / CBS 112371) (Trichophyton mentagrophytes).